The following is a 201-amino-acid chain: Small ribosomal subunit protein uS4c (201 aa).

The interval 15-44 (LGALPGLTNKRPRAGSDLRNQSRSGKKSQY) is disordered. Residues 89 to 149 (MRLDNILFRL…DEQKSRALIQ (61 aa)) enclose the S4 RNA-binding domain.

Belongs to the universal ribosomal protein uS4 family. In terms of assembly, part of the 30S ribosomal subunit. Contacts protein S5. The interaction surface between S4 and S5 is involved in control of translational fidelity.

The protein localises to the plastid. Its subcellular location is the chloroplast. In terms of biological role, one of the primary rRNA binding proteins, it binds directly to 16S rRNA where it nucleates assembly of the body of the 30S subunit. With S5 and S12 plays an important role in translational accuracy. This chain is Small ribosomal subunit protein uS4c (rps4), found in Helianthus annuus (Common sunflower).